Here is a 298-residue protein sequence, read N- to C-terminus: MKPARQAVDGVLLLNKPVGITSNAALQKAKWLLNAKKAGHTGTLDPFADGLLPLCFGEATKFSAYLLDADKRYRAILQLGVTTRTGDPEGEVLATREVRATCADIRAALPAFVGEIEQIPPMHSALKHQGRPLYEYARAGVEIARAPRRVHIRALDLFKCAPPRAVVDVQCSAGTYVRTLAEDLGNALGCGAHLTALTRTASGGFLLEQAHTLAELEATNAGARQALLLPADCLVAHLPSVHLGETAAASLRQGRSVPDAADRRGLVRVYDGHGVFVGLAEAEAGKLVPRRLIATVQA.

Aspartate 45 (nucleophile) is an active-site residue.

The protein belongs to the pseudouridine synthase TruB family. Type 1 subfamily.

The enzyme catalyses uridine(55) in tRNA = pseudouridine(55) in tRNA. In terms of biological role, responsible for synthesis of pseudouridine from uracil-55 in the psi GC loop of transfer RNAs. The chain is tRNA pseudouridine synthase B from Thiobacillus denitrificans (strain ATCC 25259 / T1).